A 161-amino-acid chain; its full sequence is Protein translocase subunit SecE (161 aa).

Residues 1–12 (MSDEGDVADEAV) are compositionally biased toward acidic residues. The disordered stretch occupies residues 1 to 80 (MSDEGDVADE…GVAKDDSTTK (80 aa)). A helical membrane pass occupies residues 133–153 (VVLAFLAFMVALVAGADLGLT).

The protein belongs to the SecE/SEC61-gamma family. In terms of assembly, component of the Sec protein translocase complex. Heterotrimer consisting of SecY, SecE and SecG subunits. The heterotrimers can form oligomers, although 1 heterotrimer is thought to be able to translocate proteins. Interacts with the ribosome. Interacts with SecDF, and other proteins may be involved. Interacts with SecA.

The protein resides in the cell membrane. Its function is as follows. Essential subunit of the Sec protein translocation channel SecYEG. Clamps together the 2 halves of SecY. May contact the channel plug during translocation. In Mycobacterium bovis (strain ATCC BAA-935 / AF2122/97), this protein is Protein translocase subunit SecE.